We begin with the raw amino-acid sequence, 786 residues long: Wall-associated receptor kinase-like 17 (786 aa).

A signal peptide spans 1–30 (MSYKNTNNSHLILFKLLLLLILYSADLTAS). Residues 31-369 (SSCRSECGGC…YRCVGDKTKA (339 aa)) lie on the Extracellular side of the membrane. N-linked (GlcNAc...) asparagine glycans are attached at residues N69, N122, N160, N165, and N274. The segment at 301 to 362 (CICDYTMSII…CVNFEGGYRC (62 aa)) is atypical EGF-like. Cystine bridges form between C303–C318, C340–C353, and C347–C362. Residues 370–390 (IMIGAGTGFGVLVLVGGVWWL) traverse the membrane as a helical segment. Over 391–786 (RKFLVKRRMA…VEPLNPLLTW (396 aa)) the chain is Cytoplasmic. T433 is subject to Phosphothreonine. The Protein kinase domain maps to 444-719 (FSENRVLGHG…REVFTELERI (276 aa)). Residues 450–458 (LGHGGQGTV) and K472 contribute to the ATP site. Y517 bears the Phosphotyrosine mark. D570 acts as the Proton acceptor in catalysis. Residues T604 and T609 each carry the phosphothreonine modification. Y617 carries the phosphotyrosine modification. A compositionally biased stretch (low complexity) spans 766–775 (SSIVASPPSS). Residues 766-786 (SSIVASPPSSDVEPLNPLLTW) form a disordered region.

The protein belongs to the protein kinase superfamily. Ser/Thr protein kinase family.

It is found in the membrane. It carries out the reaction L-seryl-[protein] + ATP = O-phospho-L-seryl-[protein] + ADP + H(+). The catalysed reaction is L-threonyl-[protein] + ATP = O-phospho-L-threonyl-[protein] + ADP + H(+). In terms of biological role, serine/threonine-protein kinase that may function as a signaling receptor of extracellular matrix component. The sequence is that of Wall-associated receptor kinase-like 17 (WAKL17) from Arabidopsis thaliana (Mouse-ear cress).